The following is a 430-amino-acid chain: Paraneoplastic antigen-like protein 8A (430 aa).

Positions 219–228 are enriched in basic and acidic residues; it reads WKNTEDHGDP. Disordered regions lie at residues 219–270, 313–364, and 392–430; these read WKNT…NSNY, DPSD…RKKK, and GLGARRAVSVPHDAPASTSRPQKTKLGAFPRVSKDSRKL. Residues 232–250 show a composition bias toward basic residues; it reads LVRRPGGKIRSRRRKQKKN. Polar residues predominate over residues 261-270; sequence SQGSNYNSNY.

This sequence belongs to the PNMA family.

This is Paraneoplastic antigen-like protein 8A from Mus musculus (Mouse).